Reading from the N-terminus, the 227-residue chain is Pyridoxal 5'-phosphate synthase subunit PdxT (227 aa).

52-54 (GES) is an L-glutamine binding site. C84 serves as the catalytic Nucleophile. L-glutamine is bound by residues R118 and 149-150 (IR). Residues H189 and E191 each act as charge relay system in the active site.

The protein belongs to the glutaminase PdxT/SNO family. In terms of assembly, in the presence of PdxS, forms a dodecamer of heterodimers. Only shows activity in the heterodimer.

It carries out the reaction aldehydo-D-ribose 5-phosphate + D-glyceraldehyde 3-phosphate + L-glutamine = pyridoxal 5'-phosphate + L-glutamate + phosphate + 3 H2O + H(+). It catalyses the reaction L-glutamine + H2O = L-glutamate + NH4(+). It participates in cofactor biosynthesis; pyridoxal 5'-phosphate biosynthesis. Its function is as follows. Catalyzes the hydrolysis of glutamine to glutamate and ammonia as part of the biosynthesis of pyridoxal 5'-phosphate. The resulting ammonia molecule is channeled to the active site of PdxS. The polypeptide is Pyridoxal 5'-phosphate synthase subunit PdxT (Renibacterium salmoninarum (strain ATCC 33209 / DSM 20767 / JCM 11484 / NBRC 15589 / NCIMB 2235)).